Consider the following 273-residue polypeptide: 2,3,4,5-tetrahydropyridine-2,6-dicarboxylate N-succinyltransferase (273 aa).

Belongs to the transferase hexapeptide repeat family.

It is found in the cytoplasm. It catalyses the reaction (S)-2,3,4,5-tetrahydrodipicolinate + succinyl-CoA + H2O = (S)-2-succinylamino-6-oxoheptanedioate + CoA. It participates in amino-acid biosynthesis; L-lysine biosynthesis via DAP pathway; LL-2,6-diaminopimelate from (S)-tetrahydrodipicolinate (succinylase route): step 1/3. The polypeptide is 2,3,4,5-tetrahydropyridine-2,6-dicarboxylate N-succinyltransferase (Bordetella petrii (strain ATCC BAA-461 / DSM 12804 / CCUG 43448)).